The following is a 268-amino-acid chain: MLHVSMVGCGAIGQGVLELLKSDPDLCFDTVIVPEHGMDRARAAIAPFAPRTRVMTRLPAQADRPDLLVECAGHDALREHVVPALEQGIDCLVVSVGALSEPGLAERLEAAARRGHAQMQLLSGAIGAIDALAAARVGGLDAVVYTGRKPPRAWKGTPAERQFDLDALDRTTVIFEGKASDAALLFPKNANVAATLALAGLGMERTHVRLLADPTIDENIHHVEARGAFGGFELIMRGKPLAANPKTSALTVFSVVRALGNRAHAVSI.

2 residues coordinate NAD(+): A125 and N191. Residue H221 is part of the active site.

This sequence belongs to the L-aspartate dehydrogenase family.

The enzyme catalyses L-aspartate + NADP(+) + H2O = oxaloacetate + NH4(+) + NADPH + H(+). The catalysed reaction is L-aspartate + NAD(+) + H2O = oxaloacetate + NH4(+) + NADH + H(+). Its pathway is cofactor biosynthesis; NAD(+) biosynthesis; iminoaspartate from L-aspartate (dehydrogenase route): step 1/1. In terms of biological role, specifically catalyzes the NAD or NADP-dependent dehydrogenation of L-aspartate to iminoaspartate. The chain is L-aspartate dehydrogenase from Ralstonia nicotianae (strain ATCC BAA-1114 / GMI1000) (Ralstonia solanacearum).